Here is a 153-residue protein sequence, read N- to C-terminus: Probable trafficking protein particle complex subunit 2 (153 aa).

Belongs to the TRAPP small subunits family. Sedlin subfamily. Part of the multisubunit TRAPP (transport protein particle) complex.

Its subcellular location is the cytoplasm. It is found in the perinuclear region. The protein resides in the endoplasmic reticulum. It localises to the golgi apparatus. Functionally, may play a role in vesicular transport from endoplasmic reticulum to Golgi. The polypeptide is Probable trafficking protein particle complex subunit 2 (Nematostella vectensis (Starlet sea anemone)).